A 409-amino-acid polypeptide reads, in one-letter code: MDKLLERFLHYVSLDTQSKSGVRQVPSTEGQWKLLRLLKQQLEEMGLVNITLSEKGTLMATLPANVEGDIPAIGFISHVDTSPDFSGKNVNPQIVENYRGGDIALGIGDEVLSPVMFPVLHQLLGQTLITTDGKTLLGADDKAGVAEIMTALAVLKGNPIPHGDIKVAFTPDEEVGKGAKHFDVEEFGAQWAYTVDGGGVGELEFENFNAASVNIKIVGNNVHPGTAKGVMVNALSLAARIHAEVPADEAPETTEGYEGFYHLASMKGTVDRAEMHYIIRDFDRKQFEARKRKMMEIAKKVGKGLHPDCYIELVIEDSYYNMREKVVEHPHILDIAQQAMRDCHITPEMKPIRGGTDGAQLSFMGLPCPNLFTGGYNYHGKHEFVTLEGMEKAVQVIVRIAELTAKRGQ.

His-78 lines the Zn(2+) pocket. Asp-80 is a catalytic residue. Asp-140 lines the Zn(2+) pocket. The active-site Proton acceptor is Glu-173. Residues Glu-174, Asp-196, and His-379 each coordinate Zn(2+).

The protein belongs to the peptidase M20B family. It depends on Zn(2+) as a cofactor.

The protein resides in the cytoplasm. It catalyses the reaction Release of the N-terminal residue from a tripeptide.. Its function is as follows. Cleaves the N-terminal amino acid of tripeptides. The protein is Peptidase T of Salmonella agona (strain SL483).